A 660-amino-acid chain; its full sequence is MDVLVSECSARLLQQEEEIKSLTAEIDRLKNCGCLGASPNLEQLQEENLKLKYRLNILRKSLQAERNKPTKNMINIISRLQEVFGHAIKAAYPDLENPPLLVTPSQQAKFGDYQCNSAMGISQMLKTKEQKVNPREIAENITKHLPDNECIEKVEIAGPGFINVHLRKDFVSEQLTSLLVNGVQLPALGENKKVIVDFSSPNIAKEMHVGHLRSTIIGESISRLFEFAGYDVLRLNHVGDWGTQFGMLIAHLQDKFPDYLTVSPPIGDLQVFYKESKKRFDTEEEFKKRAYQCVVLLQGKNPDITKAWKLICDVSRQELNKIYDALDVSLIERGESFYQDRMNDIVKEFEDRGFVQVDDGRKIVFVPGCSIPLTIVKSDGGYTYDTSDLAAIKQRLFEEKADMIIYVVDNGQSVHFQTIFAAAQMIGWYDPKVTRVFHAGFGVVLGEDKKKFKTRSGETVRLMDLLGEGLKRSMDKLKEKERDKVLTAEELNAAQTSVAYGCIKYADLSHNRLNDYIFSFDKMLDDRGNTAAYLLYAFTRIRSIARLANIDEEMLQKAARETKILLDHEKEWKLGRCILRFPEILQKILDDLFLHTLCDYIYELATAFTEFYDSCYCVEKDRQTGKILKVNMWRMLLCEAVAAVMAKGFDILGIKPVQRM.

The residue at position 1 (methionine 1) is an N-acetylmethionine. Residues 1–72 are could be involved in the assembly of the multisynthetase complex; that stretch reads MDVLVSECSA…QAERNKPTKN (72 aa). L-arginine is bound by residues 200-202, histidine 211, tyrosine 384, aspartate 388, and glutamine 412; that span reads SPN. The short motif at 201–212 is the 'HIGH' region element; sequence PNIAKEMHVGHL. An interaction with tRNA region spans residues 529-543; it reads NTAAYLLYAFTRIRS.

Belongs to the class-I aminoacyl-tRNA synthetase family. As to quaternary structure, interacts (via N-terminus) with AIMP1 (via N-terminus); this stimulates its catalytic activity. Interacts (via N-terminus) with LARS2 (via C-terminus). Monomer. Part of a multisubunit complex that groups tRNA ligases for Arg (RARS1), Asp (DARS1), Gln (QARS1), Ile (IARS1), Leu (LARS1), Lys (KARS1), Met (MARS1) the bifunctional ligase for Glu and Pro (EPRS1) and the auxiliary subunits AIMP1/p43, AIMP2/p38 and EEF1E1/p18. Interacts with QARS1. Part of a complex composed of RARS1, QARS1 and AIMP1.

The protein localises to the cytoplasm. The protein resides in the cytosol. It catalyses the reaction tRNA(Arg) + L-arginine + ATP = L-arginyl-tRNA(Arg) + AMP + diphosphate. Its function is as follows. Forms part of a macromolecular complex that catalyzes the attachment of specific amino acids to cognate tRNAs during protein synthesis. Modulates the secretion of AIMP1 and may be involved in generation of the inflammatory cytokine EMAP2 from AIMP1. In Homo sapiens (Human), this protein is Arginine--tRNA ligase, cytoplasmic.